We begin with the raw amino-acid sequence, 30 residues long: Bacteriocin plantaricin KL-1Y (30 aa).

The protein localises to the secreted. Functionally, bacteriocin with activity against species of Lactobacillus, Lactococcus, Pediococcus, Leuconostoc and against B.subtilis and, to a lesser extent, against B.coagulans, B.cereus and species of Enterococcus, Listeria, Kocuria, Staphylococcus, Corynebacterium, Salmonella, Pseudomonas and Escherichia. This is Bacteriocin plantaricin KL-1Y from Lactiplantibacillus plantarum (Lactobacillus plantarum).